Consider the following 80-residue polypeptide: Conotoxin Vi6.2 (80 aa).

The signal sequence occupies residues 1–22; sequence MKLTCVLITTVLFLTASQLITA. The propeptide occupies 23–47; it reads DYSRDKRQYRAVRLRDEMRNFKGAR. 3 cysteine pairs are disulfide-bonded: C49–C62, C56–C67, and C61–C77. Residues P60 and P63 each carry the 4-hydroxyproline modification.

The protein belongs to the conotoxin O1 superfamily. As to expression, expressed by the venom duct.

The protein localises to the secreted. Functionally, ion channel inhibitor that inhibits the increase in intracellular calcium upon depolarization in DRG neurons. In vivo, both intraperitoneal and intracranial injections into mice induce hyperactivity. This chain is Conotoxin Vi6.2, found in Conus virgo (Virgin cone).